Reading from the N-terminus, the 297-residue chain is MSEQISEQSEQNVYGACPPVPAGESSPSAASAPRTKVRTHHLQKWKAEGHKWAMLTVYDYSTARAFDDAGIPVLLVGDSAANVVYGYDTTVPISIDELIPLVRGVVRGAPHALVVADLPFGSYESGPSAALAAATRFMKEAGAHAVKLEGGERVAEQIACLTAAGIPVMAHIGFTPQSVNTLGGFRVQGRGDAAEQTIADAIAVAEAGAFSVVMEMVPAELATQITGKLTIPTIGIGAGPSCDGQVLVWQDMAGLSSGKAPRFVKRYADVGGELRRAAVQYAQDVAGGVFPAEEHCF.

A compositionally biased stretch (polar residues) spans 1-12; the sequence is MSEQISEQSEQN. A disordered region spans residues 1–36; that stretch reads MSEQISEQSEQNVYGACPPVPAGESSPSAASAPRTK. The span at 22–33 shows a compositional bias: low complexity; the sequence is AGESSPSAASAP. Residues aspartate 78 and aspartate 117 each contribute to the Mg(2+) site. 3-methyl-2-oxobutanoate-binding positions include 78-79, aspartate 117, and lysine 147; that span reads DS. Glutamate 149 lines the Mg(2+) pocket. Glutamate 215 acts as the Proton acceptor in catalysis.

It belongs to the PanB family. Homodecamer; pentamer of dimers. Requires Mg(2+) as cofactor.

The protein localises to the cytoplasm. It carries out the reaction 3-methyl-2-oxobutanoate + (6R)-5,10-methylene-5,6,7,8-tetrahydrofolate + H2O = 2-dehydropantoate + (6S)-5,6,7,8-tetrahydrofolate. It participates in cofactor biosynthesis; (R)-pantothenate biosynthesis; (R)-pantoate from 3-methyl-2-oxobutanoate: step 1/2. Its function is as follows. Catalyzes the reversible reaction in which hydroxymethyl group from 5,10-methylenetetrahydrofolate is transferred onto alpha-ketoisovalerate to form ketopantoate. The protein is 3-methyl-2-oxobutanoate hydroxymethyltransferase of Mycobacterium ulcerans (strain Agy99).